The following is a 242-amino-acid chain: MSEWLFDLGNSRFKYAPLHGNRAGQVQAWAHGAEAMDAAALAALPSGRIAYVASVAAPALTQPMIACLQERFTQVRIVRTTAECAGVRIAYADPSRFGVDRFLALLGARGDAPVLVAGVGTALTIDVLGADGLHHGGRIAASPTTMREALHARAVQLPASGGDYVELAIDTDDALTSGCDGAAVALIERSLQHAQRSLGVPVRLLVHGGGAPPLLPLLPDASFRAALVLDGLATWATAAASP.

7-14 (DLGNSRFK) contacts ATP. Substrate contacts are provided by residues tyrosine 91 and 98-101 (GVDR). Aspartate 100 functions as the Proton acceptor in the catalytic mechanism. Threonine 121 is a binding site for ATP. Residue threonine 171 participates in substrate binding.

Belongs to the type III pantothenate kinase family. As to quaternary structure, homodimer. The cofactor is NH4(+). It depends on K(+) as a cofactor.

The protein resides in the cytoplasm. The catalysed reaction is (R)-pantothenate + ATP = (R)-4'-phosphopantothenate + ADP + H(+). It participates in cofactor biosynthesis; coenzyme A biosynthesis; CoA from (R)-pantothenate: step 1/5. Functionally, catalyzes the phosphorylation of pantothenate (Pan), the first step in CoA biosynthesis. This chain is Type III pantothenate kinase, found in Xanthomonas euvesicatoria pv. vesicatoria (strain 85-10) (Xanthomonas campestris pv. vesicatoria).